The following is a 412-amino-acid chain: MISQIDKTELLERFLHYVSFHTQSKPHAKHSPSSVGQMKLAMQLQKELIQLGLENVEVSKYAVVTAFLPANDPNLTKTIGLVAHLDTSPQCSGKNVRPEVIEEYRGGDIALGIGEEFISPVYYSFMQKLVGQTLIVTDGTTLLGADNKAGIAEIMTALSILQKENIPHCNIRVAFTPDEEIGLGIHYFPMEKFSCDWAYTIDGGEVGELEYENFNAATAKVRFFGRNIHTGYAKGKMLNALTLACEFQQVFPVDEVPEKTDGKVGFYHLEDFSGDIEQVELTYLIRDFDEQNFAQRKAFIKNQVEKFNAKKGLKKPIELEIQDSYQNMYDVVKNVPQSIELADRAMKAVGIKPNHKPIRGGTDGAFLASKGLACPNIFTGGYNFHSKHELVSLQGMENTVQVIIEMLKCKDL.

A Zn(2+)-binding site is contributed by H84. Residue D86 is part of the active site. D146 lines the Zn(2+) pocket. Catalysis depends on E179, which acts as the Proton acceptor. Zn(2+) is bound by residues E180, D202, and H385.

Belongs to the peptidase M20B family. It depends on Zn(2+) as a cofactor.

It is found in the cytoplasm. The catalysed reaction is Release of the N-terminal residue from a tripeptide.. Cleaves the N-terminal amino acid of tripeptides. This chain is Peptidase T, found in Haemophilus influenzae (strain PittGG).